An 876-amino-acid polypeptide reads, in one-letter code: Alanine--tRNA ligase (876 aa).

Histidine 564, histidine 568, cysteine 666, and histidine 670 together coordinate Zn(2+).

The protein belongs to the class-II aminoacyl-tRNA synthetase family. As to quaternary structure, homotetramer. The cofactor is Zn(2+).

The protein resides in the cytoplasm. It carries out the reaction tRNA(Ala) + L-alanine + ATP = L-alanyl-tRNA(Ala) + AMP + diphosphate. In terms of biological role, catalyzes the attachment of alanine to tRNA(Ala) in a two-step reaction: alanine is first activated by ATP to form Ala-AMP and then transferred to the acceptor end of tRNA(Ala). Also edits incorrectly charged Ser-tRNA(Ala) and Gly-tRNA(Ala) via its editing domain. In Salmonella paratyphi B (strain ATCC BAA-1250 / SPB7), this protein is Alanine--tRNA ligase.